The sequence spans 406 residues: Zinc finger protein 57 (406 aa).

Residues 17 to 88 form the KRAB domain; that stretch reads VRYEDVAVSF…TCTGVFKGGP (72 aa). The interval 57-77 is disordered; the sequence is ESKKKPQEPNPNLKDKDDDKS. The C2H2-type 1; degenerate zinc-finger motif lies at 90–113; it reads FFCLTCGKCFKKNTFLFNHQFPVR. C2H2-type zinc fingers lie at residues 140 to 162 and 168 to 190; these read FFCNLCGKTYRDASGLSRHRRAH and RSCPECGKCFRDQSEVNRHLKVH. The disordered stretch occupies residues 194 to 226; that stretch reads KPVAGSHVKVHQNKPVASNQKQKGRVPPTTRES. The C2H2-type 4 zinc-finger motif lies at 270-292; it reads VYCPYCRITFTMRTCLLNHLKIH. Residues 318-337 form a C2H2-type 5; degenerate zinc finger; that stretch reads YNCPVCDSSFRGKESLLNHL. The tract at residues 372 to 406 is disordered; it reads SRKRRRKRISSDSSETEGPSGSDEVMEVDTDSDLS. A compositionally biased stretch (acidic residues) spans 395–406; sequence EVMEVDTDSDLS.

The protein belongs to the krueppel C2H2-type zinc-finger protein family. Expressed in oligodendrocytes and at lower levels in astrocytes.

Its subcellular location is the nucleus. In terms of biological role, transcription regulator required to maintain maternal and paternal gene imprinting, a process by which gene expression is restricted in a parent of origin-specific manner by epigenetic modification of genomic DNA and chromatin, including DNA methylation. Acts by controlling DNA methylation during the earliest multicellular stages of development at multiple imprinting control regions (ICRs). Acts together with ZNF445. Required for the establishment of maternal methylation imprints at SNRPN locus. Acts as a transcriptional repressor in Schwann cells. Binds to a 5'-TGCCGC-3' consensus sequence and recognizes the methylated CpG within this element. This chain is Zinc finger protein 57 (Zfp57), found in Rattus norvegicus (Rat).